The primary structure comprises 1116 residues: Protein translocase subunit SecA (1116 aa).

Residues Q176, G194 to T198, and D693 contribute to the ATP site.

Belongs to the SecA family. As to quaternary structure, monomer and homodimer. Part of the essential Sec protein translocation apparatus which comprises SecA, SecYEG and auxiliary proteins SecDF. Other proteins may also be involved.

Its subcellular location is the cell inner membrane. It localises to the cytoplasm. It carries out the reaction ATP + H2O + cellular proteinSide 1 = ADP + phosphate + cellular proteinSide 2.. In terms of biological role, part of the Sec protein translocase complex. Interacts with the SecYEG preprotein conducting channel. Has a central role in coupling the hydrolysis of ATP to the transfer of proteins into and across the cell membrane, serving as an ATP-driven molecular motor driving the stepwise translocation of polypeptide chains across the membrane. This Amoebophilus asiaticus (strain 5a2) protein is Protein translocase subunit SecA.